The sequence spans 484 residues: Probable receptor-like protein kinase At5g18500 (484 aa).

The chain crosses the membrane as a helical span at residues 21-41; sequence IIVIVLSAIFVVVLAISLWLT. Residues 72–135 are disordered; sequence RVDEVSSSNG…SVSSANPLTA (64 aa). The span at 91 to 105 shows a compositional bias: basic and acidic residues; that stretch reads KFGDKEPEKGIKAES. A compositionally biased stretch (polar residues) spans 125–134; that stretch reads SSVSSANPLT. Threonine 155 is subject to Phosphothreonine. The Protein kinase domain occupies 166–445; the sequence is FSRDNIIGDG…MLESEEYPIA (280 aa). ATP-binding positions include 172 to 180 and lysine 194; that span reads IGDGGYGVV. Tyrosine 239 carries the post-translational modification Phosphotyrosine. The Proton acceptor role is filled by aspartate 292. Serine 296 carries the phosphoserine modification. Residues threonine 326 and threonine 331 each carry the phosphothreonine modification. Residue tyrosine 339 is modified to Phosphotyrosine. Positions 425 to 484 are disordered; sequence EKRPRMSQVARMLESEEYPIAREDRRRRRSQNGTTRDSDPPRNSTDTDKSEYHDLKPEGG. Residues 460 to 484 are compositionally biased toward basic and acidic residues; sequence RDSDPPRNSTDTDKSEYHDLKPEGG.

Belongs to the protein kinase superfamily. Ser/Thr protein kinase family.

It localises to the cell membrane. It carries out the reaction L-seryl-[protein] + ATP = O-phospho-L-seryl-[protein] + ADP + H(+). The catalysed reaction is L-threonyl-[protein] + ATP = O-phospho-L-threonyl-[protein] + ADP + H(+). The chain is Probable receptor-like protein kinase At5g18500 from Arabidopsis thaliana (Mouse-ear cress).